The following is a 467-amino-acid chain: Glutamate--tRNA ligase (467 aa).

The 'HIGH' region motif lies at 10–20; the sequence is PSPTGYLHVGG. Residues Cys99, Cys101, Cys126, and Glu128 each contribute to the Zn(2+) site. The 'KMSKS' region signature appears at 237-241; the sequence is RLSKR. Residue Lys240 participates in ATP binding.

This sequence belongs to the class-I aminoacyl-tRNA synthetase family. Glutamate--tRNA ligase type 1 subfamily. As to quaternary structure, monomer. The cofactor is Zn(2+).

It localises to the cytoplasm. It catalyses the reaction tRNA(Glu) + L-glutamate + ATP = L-glutamyl-tRNA(Glu) + AMP + diphosphate. In terms of biological role, catalyzes the attachment of glutamate to tRNA(Glu) in a two-step reaction: glutamate is first activated by ATP to form Glu-AMP and then transferred to the acceptor end of tRNA(Glu). The chain is Glutamate--tRNA ligase from Geotalea uraniireducens (strain Rf4) (Geobacter uraniireducens).